We begin with the raw amino-acid sequence, 427 residues long: MAATSYMTPPSGDLDMALGGGGYHTSSPRSAADAGEMKYMQHHHHHHAAAAAAAHHQLPSSPSPNGQGNGGGLGLGSGSGLGSWSALHPDPWMQTHHTHHLPAAAAVASAADTVKQEMSHLSQQTRIQQGMASPHAAWHAPHAGHYAPTGGSPLQYHHAMNGMLHHPAHAVAAAHHQSVAPLHHTLRGESPQLHIHHHMGGGDRDAISGGEEDTPTSDDLEAFAKQFKQRRIKLGFTQADVGLALGTLYGNVFSQTTICRFEALQLSFKNMCKLKPLLQKWLEEADSTTGSPTSIDKIAAQGRKRKKRTSIEVSVKGALEQHFHKQPKPSAQEITSLADSLQLEKEVVRVWFCNRRQKEKRMTPPNTLGGDMMDGMPPGHMHHGGYHPHHDMHGSPMGTHSHSHSPPMLSPQNMQSSAVAAHQLAAH.

Disordered stretches follow at residues Tyr39 to Ser77, His196 to Ser217, Thr288 to Thr309, and His390 to His427. The span at Ala49 to Gly66 shows a compositional bias: low complexity. The span at Gln67 to Ser77 shows a compositional bias: gly residues. Residues Glu212–Asp286 form the POU-specific domain. The homeobox DNA-binding region spans Lys304 to Thr363.

Belongs to the POU transcription factor family. Class-3 subfamily. As to expression, coexpressed with acj6 in overlapping subsets of neurons in the embryonic epidermis and central nervous system. First detected in the precursor of the tracheal pits and the stomodeal invagination and later in the peripheral nervous system.

It localises to the nucleus. In terms of biological role, binds to a DNA sequence element required for the expression of the dopa decarboxylase gene (Ddc) in specific dopaminergic neurons. Could also play an early role in specific ectodermal cells, and a subsequent role in the embryonic nervous system. The sequence is that of POU domain protein CF1A (vvl) from Drosophila melanogaster (Fruit fly).